Here is a 119-residue protein sequence, read N- to C-terminus: Small ribosomal subunit protein uS13 (119 aa).

Residues 96–119 form a disordered region; sequence PVRGQRTKTNARTRKGPRKLIKSR.

The protein belongs to the universal ribosomal protein uS13 family. In terms of assembly, part of the 30S ribosomal subunit. Forms a loose heterodimer with protein S19. Forms two bridges to the 50S subunit in the 70S ribosome.

Its function is as follows. Located at the top of the head of the 30S subunit, it contacts several helices of the 16S rRNA. In the 70S ribosome it contacts the 23S rRNA (bridge B1a) and protein L5 of the 50S subunit (bridge B1b), connecting the 2 subunits; these bridges are implicated in subunit movement. Contacts the tRNAs in the A and P-sites. The sequence is that of Small ribosomal subunit protein uS13 from Buchnera aphidicola subsp. Cinara cedri (strain Cc).